A 230-amino-acid chain; its full sequence is Dephospho-CoA kinase (230 aa).

The disordered stretch occupies residues 1-21 (MSKYAAAPSPYSHQPQTPEHK). The DPCK domain occupies 26–225 (VVGLTGGIGS…QDYLKLAQQL (200 aa)). Residue 34 to 39 (GSGKSA) participates in ATP binding.

This sequence belongs to the CoaE family.

It localises to the cytoplasm. It catalyses the reaction 3'-dephospho-CoA + ATP = ADP + CoA + H(+). It functions in the pathway cofactor biosynthesis; coenzyme A biosynthesis; CoA from (R)-pantothenate: step 5/5. In terms of biological role, catalyzes the phosphorylation of the 3'-hydroxyl group of dephosphocoenzyme A to form coenzyme A. This chain is Dephospho-CoA kinase, found in Psychrobacter cryohalolentis (strain ATCC BAA-1226 / DSM 17306 / VKM B-2378 / K5).